The primary structure comprises 317 residues: Ret finger protein-like 1 (317 aa).

An RING-type zinc finger spans residues 40 to 82 (CPVCSDYLEKPMSLECGCAVCFKCINSLQKEPHGEDLLCCCCS). In terms of domain architecture, B30.2/SPRY spans 107-301 (EPKLKKILQM…DKSVLSICPV (195 aa)).

Post-translationally, phosphorylated by PKC and CDK1. The antiproliferative effect seems to be positively regulated by PKC phosphorylation and negatively by CDK1 phosphorylation. Seems to be expressed in prostate and less abundantly in adult brain, fetal liver, and fetal kidney.

It localises to the cytoplasm. Its subcellular location is the nucleus. In terms of biological role, negatively regulates the G2-M phase transition, possibly by promoting cyclin B1/CCNB1 and CDK1 proteasomal degradation and thereby preventing their accumulation during interphase. This Homo sapiens (Human) protein is Ret finger protein-like 1 (RFPL1).